A 179-amino-acid polypeptide reads, in one-letter code: Large ribosomal subunit protein uL5 (179 aa).

Belongs to the universal ribosomal protein uL5 family. Part of the 50S ribosomal subunit; part of the 5S rRNA/L5/L18/L25 subcomplex. Contacts the 5S rRNA and the P site tRNA. Forms a bridge to the 30S subunit in the 70S ribosome.

Functionally, this is one of the proteins that bind and probably mediate the attachment of the 5S RNA into the large ribosomal subunit, where it forms part of the central protuberance. In the 70S ribosome it contacts protein S13 of the 30S subunit (bridge B1b), connecting the 2 subunits; this bridge is implicated in subunit movement. Contacts the P site tRNA; the 5S rRNA and some of its associated proteins might help stabilize positioning of ribosome-bound tRNAs. This chain is Large ribosomal subunit protein uL5, found in Buchnera aphidicola subsp. Acyrthosiphon kondoi (Acyrthosiphon kondoi symbiotic bacterium).